The sequence spans 274 residues: Large ribosomal subunit protein uL2cz/uL2cy (274 aa).

Disordered stretches follow at residues 1 to 21 (MAIHLYKTSTPSTRNGAVDSQ) and 224 to 252 (NPVDHPHGGGEGRAPIGRKKPVTPWGYPA).

It belongs to the universal ribosomal protein uL2 family. As to quaternary structure, part of the 50S ribosomal subunit.

The protein localises to the plastid. It localises to the chloroplast. This is Large ribosomal subunit protein uL2cz/uL2cy (rpl2-A) from Olimarabidopsis pumila (Dwarf rocket).